The following is a 1260-amino-acid chain: Agglutinin-like protein 1 (1260 aa).

A signal peptide spans 1 to 17; the sequence is MLQQFTLLFLYLSIASA. Cystine bridges form between C73–C150, C96–C112, C205–C298, and C227–C256. 3 ALS repeats span residues 365-396, 401-432, and 438-469; these read TTITTSYVGVTTSYSTKTAPIGETATVIVDVP, TTVTSEWTGTITTTTTRTNPTDSIDTVVVQVP, and VSTTEYWSQSYATTTTVTAPPGGTDTVIIREP. N471 carries an N-linked (GlcNAc...) asparagine glycan. An ALS 4 repeat occupies 474 to 505; it reads VTTTEYWSQSFATTTTVTAPPGETDTVIIREP. N-linked (GlcNAc...) asparagine glycosylation is present at N507. An ALS 5 repeat occupies 510-541; it reads VTTTEYWSQSYATTTTVTAPPGGTDTVLIREP. N-linked (GlcNAc...) asparagine glycosylation is present at N543. The stretch at 546–577 is one ALS 6 repeat; that stretch reads VTTTEYWSQSYATTTTVTAPPGGTDTVIIREP. N-linked (GlcNAc...) asparagine glycosylation is present at N579. An ALS 7 repeat occupies 582–613; it reads VTTTEYWSQSYATTTTITAPPGETDTVIIREP. An N-linked (GlcNAc...) asparagine glycan is attached at N615. An ALS 8 repeat occupies 618–649; that stretch reads VTTTEYWSQSYATTTTVTAPPGGTDTVLIREP. N651 is a glycosylation site (N-linked (GlcNAc...) asparagine). One copy of the ALS 9 repeat lies at 654-685; it reads VTTTEYWSQSYATTTTVTAPPGGTDTVLIREP. The N-linked (GlcNAc...) asparagine glycan is linked to N687. Residues 690–721 form an ALS 10 repeat; it reads VTTTEYWSQSYATTTTVTAPPGGTDTVIIREP. N723 carries N-linked (GlcNAc...) asparagine glycosylation. The ALS 11 repeat unit spans residues 726-757; it reads VTTTEYWSQSYATTTTVTAPPGGTDTVIIREP. A glycan (N-linked (GlcNAc...) asparagine) is linked at N759. An ALS 12 repeat occupies 762-791; that stretch reads VTTTEYWSQSFATTTTVTAPPGGTDTVIIY. Residues N820, N886, N918, and N973 are each glycosylated (N-linked (GlcNAc...) asparagine). Polar residues-rich tracts occupy residues 896–918 and 964–979; these read PTASTMSDSLSSTDGISATSSDN and KVTFTSNGDNQSGTHD. Disordered regions lie at residues 896-924 and 954-1226; these read PTASTMSDSLSSTDGISATSSDNVSKSGV and SIPS…SSSP. Over residues 980-995 the composition is skewed to low complexity; sequence SQSTSTEIEIVTTSST. A compositionally biased stretch (polar residues) spans 1002-1062; sequence VSSNTDLTSE…PTVATSTLAS (61 aa). N-linked (GlcNAc...) asparagine glycans are attached at residues N1045 and N1068. Polar residues predominate over residues 1073 to 1090; the sequence is HESASTSLKPSMGENSGL. A compositionally biased stretch (low complexity) spans 1091–1110; the sequence is TTSTEIEATTTSPTEAPSPA. The segment covering 1111–1154 has biased composition (polar residues); it reads VSSGTDVTTEPTDTREQPTTLSTTSKTNSESVATTQATNENGGK. Low complexity-rich tracts occupy residues 1155-1176 and 1197-1226; these read SPSTDLTSSLTTGTSASTSANS and SHSTSVTNSNSIVSNTPQTTLSQQVTSSSP. Residue G1238 is the site of GPI-anchor amidated glycine attachment. Positions 1239-1260 are cleaved as a propeptide — removed in mature form; the sequence is SGSIIQHSTWLYGLITLLSLFI.

This sequence belongs to the ALS family. In terms of processing, the GPI-anchor is attached to the protein in the endoplasmic reticulum and serves to target the protein to the cell surface. There, the glucosamine-inositol phospholipid moiety is cleaved off and the GPI-modified mannoprotein is covalently attached via its lipidless GPI glycan remnant to the 1,6-beta-glucan of the outer cell wall layer.

It localises to the cell membrane. Its subcellular location is the secreted. It is found in the cell wall. Its function is as follows. Major cell surface adhesion protein which mediates both yeast-to-host tissue adherence and yeast aggregation. Acts as a downstream effector of the EFG1 regulatory pathway. Required for rapamycin-induced aggregation of C.albicans. Binds glycans and mediates adherence to endothelial and epithelial cells, thereby playing an important role in the pathogenesis of C.albicans infections. The protein is Agglutinin-like protein 1 (ALS1) of Candida albicans (strain SC5314 / ATCC MYA-2876) (Yeast).